A 120-amino-acid polypeptide reads, in one-letter code: Flagellar protein FliT (120 aa).

The tract at residues methionine 1–isoleucine 50 is required for homodimerization. The segment at leucine 60 to lysine 98 is fliD binding.

Belongs to the FliT family. Homodimer. Interacts with FliD and FlhC.

The protein localises to the cytoplasm. It localises to the cytosol. Dual-function protein that regulates the transcription of class 2 flagellar operons and that also acts as an export chaperone for the filament-capping protein FliD. As a transcriptional regulator, acts as an anti-FlhDC factor; it directly binds FlhC, thus inhibiting the binding of the FlhC/FlhD complex to class 2 promoters, resulting in decreased expression of class 2 flagellar operons. As a chaperone, effects FliD transition to the membrane by preventing its premature polymerization, and by directing it to the export apparatus. The polypeptide is Flagellar protein FliT (Yersinia enterocolitica serotype O:8 / biotype 1B (strain NCTC 13174 / 8081)).